The following is a 704-amino-acid chain: Elongation factor G (704 aa).

The tr-type G domain occupies 8–290 (ARYRNIGISA…AVIDYLPAPT (283 aa)). Residues 17 to 24 (AHIDAGKT), 88 to 92 (DTPGH), and 142 to 145 (NKMD) contribute to the GTP site.

The protein belongs to the TRAFAC class translation factor GTPase superfamily. Classic translation factor GTPase family. EF-G/EF-2 subfamily.

It is found in the cytoplasm. Functionally, catalyzes the GTP-dependent ribosomal translocation step during translation elongation. During this step, the ribosome changes from the pre-translocational (PRE) to the post-translocational (POST) state as the newly formed A-site-bound peptidyl-tRNA and P-site-bound deacylated tRNA move to the P and E sites, respectively. Catalyzes the coordinated movement of the two tRNA molecules, the mRNA and conformational changes in the ribosome. The chain is Elongation factor G from Pectobacterium atrosepticum (strain SCRI 1043 / ATCC BAA-672) (Erwinia carotovora subsp. atroseptica).